We begin with the raw amino-acid sequence, 106 residues long: UPF0145 protein PFL_3418 (106 aa).

It belongs to the UPF0145 family.

The protein is UPF0145 protein PFL_3418 of Pseudomonas fluorescens (strain ATCC BAA-477 / NRRL B-23932 / Pf-5).